The following is a 646-amino-acid chain: ATP-dependent zinc metalloprotease FtsH (646 aa).

Positions 1–27 (MTNNQTDRPRPPGPESRRFDNNDKNNR) are disordered. At 1-35 (MTNNQTDRPRPPGPESRRFDNNDKNNRNRWGPIPS) the chain is on the cytoplasmic side. Positions 7-26 (DRPRPPGPESRRFDNNDKNN) are enriched in basic and acidic residues. The chain crosses the membrane as a helical span at residues 36–56 (WAWIVLIVALLLNWLVAPILF). Over 57–144 (PEGKGAVSIP…QPESSTRSLL (88 aa)) the chain is Extracellular. Residues 145-165 (LSILISFGPTILFFLLFLWLI) traverse the membrane as a helical segment. The Cytoplasmic portion of the chain corresponds to 166–646 (SKAQSSQQGL…GLGEKQPEPA (481 aa)). Residue 237 to 244 (GPPGTGKT) coordinates ATP. His459 lines the Zn(2+) pocket. The active site involves Glu460. The Zn(2+) site is built by His463 and Asp535.

It in the central section; belongs to the AAA ATPase family. This sequence in the C-terminal section; belongs to the peptidase M41 family. Homohexamer. It depends on Zn(2+) as a cofactor.

It localises to the cell membrane. Its function is as follows. Acts as a processive, ATP-dependent zinc metallopeptidase for both cytoplasmic and membrane proteins. Plays a role in the quality control of integral membrane proteins. In Thermobaculum terrenum (strain ATCC BAA-798 / CCMEE 7001 / YNP1), this protein is ATP-dependent zinc metalloprotease FtsH.